The following is a 309-amino-acid chain: MASQHDKKSVQSGLLHPRNPHRGRYDLDALCRTCPELKMHIQIKPTGDKTIDFSDAKAVLCLNRALLAHYYQVSNWQIPEGYLCPPIPGRADYIHYLADLLAEDLPTSAKGKKIRVLDIGTGANCIYPIIGSQSYGWHFVGTDIDPLAIKIAGMIVQANSCLNGKITLKQQLDKKLIFKGIINEDKFDLTMCNPPFHASLAEAEAGNQRKRKNLGHGKENRAQEKLNFGGQNAELWCPGGEIVFLRQMAEESVAFAKQVRWFSSLLSKGKNVAPLKKLLKQLGCKRIKVVEMAQGQKISRFIAWSFSQE.

Positions 1 to 21 (MASQHDKKSVQSGLLHPRNPH) are disordered.

This sequence belongs to the methyltransferase superfamily. METTL16/RlmF family.

The protein localises to the cytoplasm. The enzyme catalyses adenosine(1618) in 23S rRNA + S-adenosyl-L-methionine = N(6)-methyladenosine(1618) in 23S rRNA + S-adenosyl-L-homocysteine + H(+). Functionally, specifically methylates the adenine in position 1618 of 23S rRNA. This chain is Ribosomal RNA large subunit methyltransferase F, found in Desulfotalea psychrophila (strain LSv54 / DSM 12343).